A 452-amino-acid polypeptide reads, in one-letter code: Metacaspase-1 (452 aa).

The tract at residues 1–97 is disordered; sequence MYPGAGRPTY…GPPLQGRPRD (97 aa). The segment covering 16 to 41 has biased composition (low complexity); the sequence is QKGPYGQPQYQQQYAPPYPERYQQPY. Catalysis depends on residues His238 and Cys294.

The protein belongs to the peptidase C14B family.

In terms of biological role, involved in cell death (apoptosis). In Eremothecium gossypii (strain ATCC 10895 / CBS 109.51 / FGSC 9923 / NRRL Y-1056) (Yeast), this protein is Metacaspase-1 (MCA1).